Consider the following 308-residue polypeptide: uncharacterized protein (308 aa).

The N-terminal stretch at 1–28 (MILMKKFEIILFLFIAVLIFVFGYFVGA) is a signal peptide.

This is an uncharacterized protein from Methanocaldococcus jannaschii (strain ATCC 43067 / DSM 2661 / JAL-1 / JCM 10045 / NBRC 100440) (Methanococcus jannaschii).